The chain runs to 451 residues: MRKLISFDYSKALQFVSEKEIEYMERHAKLSLDMVLSKNAQGNDFLGWVSLPKDYDKAEFERIKKAAEKIKSDSDVLVVIGIGGSYLGARAAIEMLSHSFYNLLPKGKRNMPEIYFAGNSISSTYLSDLFELIEDKDVSINVISKSGTTTEPAIAFRVFRDFLEKKYGKEGAKSRIYVTTDRAKGALKKLADEEGYETFVIPDNVGGRYSVLTAVGLLPIAVAGISIDDMMQGAYDASTVYTKDNLNENISMQYAILRNILYRKGKAIEILVNYEPKLHYFSEWWKQLFGESEGKDNKGIYPASVDFTTDLHSMGQFIQEGSRNIFETVLNVEKPVKDIVINEDKDNIDGLNFLAGKTIDFVNKKAFEGTLLAHTDGNVPNLVVNIPEISAYYFGNLVYFFEMACAISGYINGVNPFDQPGVEAYKKNMFALLGKPGYEKEKELLEKRLGK.

Glutamate 291 acts as the Proton donor in catalysis. Residues histidine 312 and lysine 426 contribute to the active site.

The protein belongs to the GPI family.

It localises to the cytoplasm. It carries out the reaction alpha-D-glucose 6-phosphate = beta-D-fructose 6-phosphate. The protein operates within carbohydrate biosynthesis; gluconeogenesis. It functions in the pathway carbohydrate degradation; glycolysis; D-glyceraldehyde 3-phosphate and glycerone phosphate from D-glucose: step 2/4. Functionally, catalyzes the reversible isomerization of glucose-6-phosphate to fructose-6-phosphate. This is Glucose-6-phosphate isomerase from Thermoanaerobacter sp. (strain X514).